A 984-amino-acid polypeptide reads, in one-letter code: Glycine dehydrogenase (decarboxylating) (984 aa).

N6-(pyridoxal phosphate)lysine is present on Lys702.

Belongs to the GcvP family. As to quaternary structure, the glycine cleavage system is composed of four proteins: P, T, L and H. Requires pyridoxal 5'-phosphate as cofactor.

The enzyme catalyses N(6)-[(R)-lipoyl]-L-lysyl-[glycine-cleavage complex H protein] + glycine + H(+) = N(6)-[(R)-S(8)-aminomethyldihydrolipoyl]-L-lysyl-[glycine-cleavage complex H protein] + CO2. The glycine cleavage system catalyzes the degradation of glycine. The P protein binds the alpha-amino group of glycine through its pyridoxal phosphate cofactor; CO(2) is released and the remaining methylamine moiety is then transferred to the lipoamide cofactor of the H protein. The sequence is that of Glycine dehydrogenase (decarboxylating) from Xanthomonas oryzae pv. oryzae (strain MAFF 311018).